A 496-amino-acid chain; its full sequence is Solute carrier family 2, facilitated glucose transporter member 11 (496 aa).

Topologically, residues 1–11 are cytoplasmic; the sequence is MRALRRLIQGR. A helical transmembrane segment spans residues 12 to 32; the sequence is ILLLTICAAGIGGTFQFGYNL. Residues 33–61 are Extracellular-facing; that stretch reads SIINAPTLHIQEFTNETWQARTGEPLPDH. A glycan (N-linked (GlcNAc...) asparagine) is linked at Asn-47. A helical membrane pass occupies residues 62-82; that stretch reads LVLLMWSLIVSLYPLGGLFGA. At 83-97 the chain is on the cytoplasmic side; sequence LLAGPLAITLGRKKS. Residues 98–118 form a helical membrane-spanning segment; the sequence is LLVNNIFVVSAAILFGFSRKA. The Extracellular segment spans residues 119–128; the sequence is GSFEMIMLGR. A helical membrane pass occupies residues 129–149; sequence LLVGVNAGVSMNIQPMYLGES. The Cytoplasmic portion of the chain corresponds to 150-157; that stretch reads APKELRGA. A helical membrane pass occupies residues 158–178; that stretch reads VAMSSAIFTALGIVMGQVVGL. The Extracellular segment spans residues 179–187; it reads RELLGGPQA. Residues 188–208 traverse the membrane as a helical segment; the sequence is WPLLLASCLVPGALQLASLPL. Over 209–273 the chain is Cytoplasmic; that stretch reads LPESPRYLLI…LFQHRALRRQ (65 aa). A helical membrane pass occupies residues 274–294; that stretch reads VTSLVVLGSAMELCGNDSVYA. Topologically, residues 295–311 are extracellular; that stretch reads YASSVFRKAGVPEAKIQ. Residues 312-332 traverse the membrane as a helical segment; it reads YAIIGTGSCELLTAVVSCVVI. The Cytoplasmic segment spans residues 333 to 338; it reads ERVGRR. The helical transmembrane segment at 339–359 threads the bilayer; the sequence is VLLIGGYSLMTCWGSIFTVAL. Topologically, residues 360–364 are extracellular; that stretch reads CLQSS. Residues 365 to 385 traverse the membrane as a helical segment; the sequence is FPWTLYLAMACIFAFILSFGI. Residues 386 to 408 are Cytoplasmic-facing; sequence GPAGVTGILATELFDQMARPAAC. A helical transmembrane segment spans residues 409–429; the sequence is MVCGALMWIMLILVGLGFPFI. Residues 430–435 are Extracellular-facing; the sequence is MEALSH. Residues 436–456 form a helical membrane-spanning segment; it reads FLYVPFLGVCVCGAIYTGLFL. Residues 457–496 are Cytoplasmic-facing; that stretch reads PETKGKTFQEISKELHRLNFPRRAQGPTWRSLEVIQSTEL.

The protein belongs to the major facilitator superfamily. Sugar transporter (TC 2.A.1.1) family. Glucose transporter subfamily. In terms of tissue distribution, expressed in heart and skeletal muscle.

The protein localises to the cell membrane. The catalysed reaction is D-glucose(out) = D-glucose(in). Its function is as follows. Facilitative glucose transporter. The chain is Solute carrier family 2, facilitated glucose transporter member 11 from Homo sapiens (Human).